The following is a 283-amino-acid chain: Adenylate dimethylallyltransferase (283 aa).

This sequence belongs to the isopentenyl transferase family.

The catalysed reaction is dimethylallyl diphosphate + AMP = N(6)-(dimethylallyl)adenosine 5'-phosphate + diphosphate. In terms of biological role, transfers dimethylallyl groups to AMP as part of the biosynthesis of cytokinin phytohormones like isopentenyl adenine or discadenine which controle spore formation and viability. The polypeptide is Adenylate dimethylallyltransferase (iptA) (Dictyostelium discoideum (Social amoeba)).